Reading from the N-terminus, the 93-residue chain is Cell division topological specificity factor (93 aa).

The protein belongs to the MinE family.

In terms of biological role, prevents the cell division inhibition by proteins MinC and MinD at internal division sites while permitting inhibition at polar sites. This ensures cell division at the proper site by restricting the formation of a division septum at the midpoint of the long axis of the cell. The sequence is that of Cell division topological specificity factor from Agathobacter rectalis (strain ATCC 33656 / DSM 3377 / JCM 17463 / KCTC 5835 / VPI 0990) (Eubacterium rectale).